We begin with the raw amino-acid sequence, 345 residues long: Phosphoribosylformylglycinamidine cyclo-ligase (345 aa).

This sequence belongs to the AIR synthase family.

It localises to the cytoplasm. It carries out the reaction 2-formamido-N(1)-(5-O-phospho-beta-D-ribosyl)acetamidine + ATP = 5-amino-1-(5-phospho-beta-D-ribosyl)imidazole + ADP + phosphate + H(+). Its pathway is purine metabolism; IMP biosynthesis via de novo pathway; 5-amino-1-(5-phospho-D-ribosyl)imidazole from N(2)-formyl-N(1)-(5-phospho-D-ribosyl)glycinamide: step 2/2. This chain is Phosphoribosylformylglycinamidine cyclo-ligase, found in Shewanella frigidimarina (strain NCIMB 400).